Here is a 350-residue protein sequence, read N- to C-terminus: Flap endonuclease 1 (350 aa).

Residues 1 to 102 (MGVTELGKLI…IEIEKRRRVR (102 aa)) are N-domain. The Mg(2+) site is built by aspartate 31, aspartate 84, glutamate 156, glutamate 158, aspartate 177, aspartate 179, and aspartate 241. Residues 120–263 (EARKYAQRAL…RALRLIQEYG (144 aa)) form an I-domain region.

This sequence belongs to the XPG/RAD2 endonuclease family. FEN1 subfamily. Interacts with PCNA. PCNA stimulates the nuclease activity without altering cleavage specificity. Mg(2+) serves as cofactor.

In terms of biological role, structure-specific nuclease with 5'-flap endonuclease and 5'-3' exonuclease activities involved in DNA replication and repair. During DNA replication, cleaves the 5'-overhanging flap structure that is generated by displacement synthesis when DNA polymerase encounters the 5'-end of a downstream Okazaki fragment. Binds the unpaired 3'-DNA end and kinks the DNA to facilitate 5' cleavage specificity. Cleaves one nucleotide into the double-stranded DNA from the junction in flap DNA, leaving a nick for ligation. Also involved in the base excision repair (BER) pathway. Acts as a genome stabilization factor that prevents flaps from equilibrating into structures that lead to duplications and deletions. Also possesses 5'-3' exonuclease activity on nicked or gapped double-stranded DNA. In Caldivirga maquilingensis (strain ATCC 700844 / DSM 13496 / JCM 10307 / IC-167), this protein is Flap endonuclease 1.